Reading from the N-terminus, the 384-residue chain is N-acetylneuraminate epimerase (384 aa).

Positions 1–24 (MNMKTLLTYATLLSVTAFSHVVYA) are cleaved as a signal peptide. Kelch repeat units lie at residues 46-90 (KVYV…SVIG), 92-145 (YIYL…YSPD), 147-184 (RQIL…RIVD), 185-230 (DYMG…VIEG), 233-281 (VTLI…VAGA), 303-352 (QAFE…TTSE), and 354-383 (VLIV…VEVI). The active-site Proton acceptor is the Glu239.

Belongs to the NanM family. In terms of assembly, homodimer.

The protein resides in the periplasm. It catalyses the reaction N-acetyl-alpha-neuraminate = N-acetyl-beta-neuraminate. In terms of biological role, converts alpha-N-acetylneuranimic acid (Neu5Ac) to the beta-anomer, accelerating the equilibrium between the alpha- and beta-anomers. Probably facilitates sialidase-negative bacteria to compete successfully for limited amounts of extracellular Neu5Ac, which is likely taken up in the beta-anomer. In addition, the rapid removal of sialic acid from solution might be advantageous to the bacterium to damp down host responses. The protein is N-acetylneuraminate epimerase of Vibrio cholerae serotype O1 (strain ATCC 39315 / El Tor Inaba N16961).